A 79-amino-acid chain; its full sequence is MFKYTDRSVRQYIERQQRSAMLEQEQAEKDKKERRKAGLLFFGTIVVLVAVVAVYIVPQSLDAMWHENYEKPAQEAARN.

Residues 15 to 35 are a coiled coil; that stretch reads RQQRSAMLEQEQAEKDKKERR. A helical transmembrane segment spans residues 37 to 57; the sequence is AGLLFFGTIVVLVAVVAVYIV.

The protein localises to the host membrane. Its function is as follows. Inhibits host cell division leading to filamentation. Does not prevent host cell growth, DNA synthesis or chromosome segregation. Does not seem to be essential for productive bacterial host infection. The protein is Inhibitor of host cell division protein of Bacillus subtilis (Bacteriophage SP01).